We begin with the raw amino-acid sequence, 412 residues long: 8-amino-7-oxononanoate synthase (412 aa).

Arginine 28 contributes to the substrate binding site. Residue 115 to 116 (GY) participates in pyridoxal 5'-phosphate binding. Histidine 140 contacts substrate. The pyridoxal 5'-phosphate site is built by serine 186, histidine 214, and threonine 246. Lysine 249 carries the N6-(pyridoxal phosphate)lysine modification. Threonine 367 provides a ligand contact to substrate.

This sequence belongs to the class-II pyridoxal-phosphate-dependent aminotransferase family. BioF subfamily. As to quaternary structure, homodimer. Requires pyridoxal 5'-phosphate as cofactor.

The catalysed reaction is 6-carboxyhexanoyl-[ACP] + L-alanine + H(+) = (8S)-8-amino-7-oxononanoate + holo-[ACP] + CO2. The protein operates within cofactor biosynthesis; biotin biosynthesis. Its function is as follows. Catalyzes the decarboxylative condensation of pimeloyl-[acyl-carrier protein] and L-alanine to produce 8-amino-7-oxononanoate (AON), [acyl-carrier protein], and carbon dioxide. The chain is 8-amino-7-oxononanoate synthase from Paracidovorax citrulli (strain AAC00-1) (Acidovorax citrulli).